A 309-amino-acid polypeptide reads, in one-letter code: Ubiquitin domain-containing protein UBFD1 (309 aa).

The tract at residues 1 to 80 is disordered; sequence MAAAGAPDGM…VSNGEDAGGG (80 aa). The span at 9–19 shows a compositional bias: acidic residues; the sequence is GMEEPGMDTEA. The segment covering 35–57 has biased composition (low complexity); it reads EAEAAAGAAAEDSGAARGSLQPA. Positions 84–159 constitute a Ubiquitin-like domain; sequence ELVDLKIIWN…IMVVGSTIND (76 aa). Residues 171–204 are disordered; that stretch reads QQDAKAEENKKEPLCRQKQHRKVLDKGKPEDVMP. Composition is skewed to basic and acidic residues over residues 174 to 185 and 192 to 201; these read AKAEENKKEPLC and KVLDKGKPED.

In terms of assembly, binds polyubiquitin.

Its function is as follows. May play a role as NF-kappa-B regulator. This chain is Ubiquitin domain-containing protein UBFD1 (UBFD1), found in Homo sapiens (Human).